The sequence spans 148 residues: Small ribosomal subunit protein eS19 (148 aa).

It belongs to the eukaryotic ribosomal protein eS19 family.

In Dictyostelium discoideum (Social amoeba), this protein is Small ribosomal subunit protein eS19 (rps19).